An 88-amino-acid polypeptide reads, in one-letter code: Secretion system apparatus protein SsaS (88 aa).

The next 2 membrane-spanning stretches (helical) occupy residues 15–35 (WIVLFTSMPVVLVASVVGVIV) and 55–75 (LLAIAITLMVSYPWLSGILLN).

The protein belongs to the FliQ/MopD/SpaQ family.

The protein localises to the cell membrane. Part of a type III secretion system. This chain is Secretion system apparatus protein SsaS (ssaS), found in Salmonella typhimurium (strain LT2 / SGSC1412 / ATCC 700720).